The chain runs to 245 residues: 1-(5-phosphoribosyl)-5-[(5-phosphoribosylamino)methylideneamino] imidazole-4-carboxamide isomerase (245 aa).

Asp-7 functions as the Proton acceptor in the catalytic mechanism. Asp-129 acts as the Proton donor in catalysis.

It belongs to the HisA/HisF family.

It localises to the cytoplasm. The enzyme catalyses 1-(5-phospho-beta-D-ribosyl)-5-[(5-phospho-beta-D-ribosylamino)methylideneamino]imidazole-4-carboxamide = 5-[(5-phospho-1-deoxy-D-ribulos-1-ylimino)methylamino]-1-(5-phospho-beta-D-ribosyl)imidazole-4-carboxamide. The protein operates within amino-acid biosynthesis; L-histidine biosynthesis; L-histidine from 5-phospho-alpha-D-ribose 1-diphosphate: step 4/9. The chain is 1-(5-phosphoribosyl)-5-[(5-phosphoribosylamino)methylideneamino] imidazole-4-carboxamide isomerase from Shewanella halifaxensis (strain HAW-EB4).